The sequence spans 55 residues: ATP synthase protein 8 (55 aa).

A helical membrane pass occupies residues Trp-8–Leu-28. The interval Asn-34–Leu-55 is disordered. The span at Ser-39 to Leu-55 shows a compositional bias: low complexity.

This sequence belongs to the ATPase protein 8 family. F-type ATPases have 2 components, CF(1) - the catalytic core - and CF(0) - the membrane proton channel.

The protein resides in the mitochondrion membrane. Functionally, mitochondrial membrane ATP synthase (F(1)F(0) ATP synthase or Complex V) produces ATP from ADP in the presence of a proton gradient across the membrane which is generated by electron transport complexes of the respiratory chain. F-type ATPases consist of two structural domains, F(1) - containing the extramembraneous catalytic core and F(0) - containing the membrane proton channel, linked together by a central stalk and a peripheral stalk. During catalysis, ATP synthesis in the catalytic domain of F(1) is coupled via a rotary mechanism of the central stalk subunits to proton translocation. Part of the complex F(0) domain. Minor subunit located with subunit a in the membrane. The protein is ATP synthase protein 8 (MT-ATP8) of Strongylocentrotus purpuratus (Purple sea urchin).